The chain runs to 307 residues: MIQSHVSVMLNEMLEALSPKAGESYLDCTFGAGGYSKAILESCNCYVTALDRDPNVIKRAEEIQQNYGERFDFVETNFADSFAKLKEKKFDGIVLDLGVSSMQLDIADRGFSFLHDGPLDMRMSGQGLSAEEFVNAAEEKELADVIYKYGDESFSRRIAKRIVEYRKTARIDSTGKLAEIVRSSIGFRKGKIDPATKTFQAIRIYVNDELGELEQFLVNVKNILKKDGRLVVVSFHSLEDRIVKNFFKENSEKPVVRSKYAKDDMTIDPNKWLKIITNKALAPSDKEVGLNIRARSAKLRAAKAIYE.

S-adenosyl-L-methionine-binding positions include 33-35 (GGY), aspartate 51, phenylalanine 82, aspartate 96, and glutamine 103.

Belongs to the methyltransferase superfamily. RsmH family.

The protein resides in the cytoplasm. The catalysed reaction is cytidine(1402) in 16S rRNA + S-adenosyl-L-methionine = N(4)-methylcytidine(1402) in 16S rRNA + S-adenosyl-L-homocysteine + H(+). Its function is as follows. Specifically methylates the N4 position of cytidine in position 1402 (C1402) of 16S rRNA. The chain is Ribosomal RNA small subunit methyltransferase H from Rickettsia rickettsii (strain Iowa).